The primary structure comprises 324 residues: Viral cathepsin (324 aa).

The first 16 residues, 1–16, serve as a signal peptide directing secretion; sequence MNKIVLYLLVYGAVQC. A propeptide spans 17–113 (activation peptide); sequence AAYDVLKAPN…VVLDRPPDKG (97 aa). Disulfide bonds link Cys-134–Cys-175, Cys-168–Cys-208, and Cys-263–Cys-311. Cys-137 is an active-site residue. Asn-159 carries N-linked (GlcNAc...) asparagine; by host glycosylation. Residues His-270 and Asn-290 contribute to the active site.

Belongs to the peptidase C1 family. Synthesized as an inactive proenzyme and activated by proteolytic removal of the inhibitory propeptide.

The catalysed reaction is Endopeptidase of broad specificity, hydrolyzing substrates of both cathepsin L and cathepsin B.. In terms of biological role, cysteine protease that plays an essential role in host liquefaction to facilitate horizontal transmission of the virus. May participate in the degradation of foreign protein expressed by the baculovirus system. This is Viral cathepsin (Vcath) from Choristoneura fumiferana nuclear polyhedrosis virus (CfMNPV).